The following is a 135-amino-acid chain: Putative pre-16S rRNA nuclease (135 aa).

The protein belongs to the YqgF nuclease family.

It localises to the cytoplasm. Could be a nuclease involved in processing of the 5'-end of pre-16S rRNA. This chain is Putative pre-16S rRNA nuclease, found in Clostridium novyi (strain NT).